We begin with the raw amino-acid sequence, 426 residues long: C4-dicarboxylate transport protein (426 aa).

8 consecutive transmembrane segments (helical) span residues 8–28 (VLYV…HFYP), 44–64 (LIKM…IAGM), 78–98 (LLYF…ATHV), 148–168 (GEIL…ATAG), 173–193 (VVTG…RIIT), 222–242 (LIGT…GIIA), 297–317 (GYSF…LFIA), and 355–375 (AATL…ILGI).

Belongs to the dicarboxylate/amino acid:cation symporter (DAACS) (TC 2.A.23) family.

It localises to the cell inner membrane. Functionally, responsible for the transport of dicarboxylates such as succinate, fumarate, and malate from the periplasm across the membrane. In Paraburkholderia xenovorans (strain LB400), this protein is C4-dicarboxylate transport protein.